The chain runs to 371 residues: tRNA 2-selenouridine synthase (371 aa).

The region spanning 14-137 (FLDDVPLIDL…MRRFLIDTLD (124 aa)) is the Rhodanese domain. Cys-97 functions as the S-selanylcysteine intermediate in the catalytic mechanism.

It belongs to the SelU family. In terms of assembly, monomer.

The enzyme catalyses 5-methylaminomethyl-2-thiouridine(34) in tRNA + selenophosphate + (2E)-geranyl diphosphate + H2O + H(+) = 5-methylaminomethyl-2-selenouridine(34) in tRNA + (2E)-thiogeraniol + phosphate + diphosphate. It carries out the reaction 5-methylaminomethyl-2-thiouridine(34) in tRNA + (2E)-geranyl diphosphate = 5-methylaminomethyl-S-(2E)-geranyl-thiouridine(34) in tRNA + diphosphate. It catalyses the reaction 5-methylaminomethyl-S-(2E)-geranyl-thiouridine(34) in tRNA + selenophosphate + H(+) = 5-methylaminomethyl-2-(Se-phospho)selenouridine(34) in tRNA + (2E)-thiogeraniol. The catalysed reaction is 5-methylaminomethyl-2-(Se-phospho)selenouridine(34) in tRNA + H2O = 5-methylaminomethyl-2-selenouridine(34) in tRNA + phosphate. In terms of biological role, involved in the post-transcriptional modification of the uridine at the wobble position (U34) of tRNA(Lys), tRNA(Glu) and tRNA(Gln). Catalyzes the conversion of 2-thiouridine (S2U-RNA) to 2-selenouridine (Se2U-RNA). Acts in a two-step process involving geranylation of 2-thiouridine (S2U) to S-geranyl-2-thiouridine (geS2U) and subsequent selenation of the latter derivative to 2-selenouridine (Se2U) in the tRNA chain. The protein is tRNA 2-selenouridine synthase of Aeromonas salmonicida (strain A449).